The chain runs to 385 residues: Putative F-box protein At1g47765 (385 aa).

Residues methionine 1 to glutamine 19 are compositionally biased toward basic residues. Residues methionine 1–serine 24 are disordered. Residues serine 20–arginine 69 form the F-box domain.

The sequence is that of Putative F-box protein At1g47765 from Arabidopsis thaliana (Mouse-ear cress).